The chain runs to 425 residues: Histidine--tRNA ligase (425 aa).

The protein belongs to the class-II aminoacyl-tRNA synthetase family. As to quaternary structure, homodimer.

The protein resides in the cytoplasm. The enzyme catalyses tRNA(His) + L-histidine + ATP = L-histidyl-tRNA(His) + AMP + diphosphate + H(+). This chain is Histidine--tRNA ligase, found in Pelotomaculum thermopropionicum (strain DSM 13744 / JCM 10971 / SI).